The following is a 533-amino-acid chain: Calcium-dependent protein kinase 19 (533 aa).

2 stretches are compositionally biased toward polar residues: residues 1-12 (MGSCCSRATSPD) and 24-38 (SHQT…SYNH). The tract at residues 1–53 (MGSCCSRATSPDSGRGGANGYGYSHQTKPAQTTPSYNHPQPPPPAEVRYTPSA) is disordered. Glycine 2 carries the N-myristoyl glycine lipid modification. The region spanning 85-343 (YSLGKELGRG…SAQVLQHPWL (259 aa)) is the Protein kinase domain. Residues 91 to 99 (LGRGQFGVT) and lysine 114 each bind ATP. Catalysis depends on aspartate 209, which acts as the Proton acceptor. The segment at 348-378 (ASDKPIDSAVLSRMKQFRAMNKLKKMALKVI) is autoinhibitory domain. EF-hand domains are found at residues 385 to 420 (EEIK…LGSK), 421 to 456 (LSEA…RHKL), 457 to 492 (ERDE…HEMG), and 497 to 527 (IKDI…GGMQ). Ca(2+) is bound by residues aspartate 398, aspartate 400, serine 402, threonine 404, glutamate 409, aspartate 434, aspartate 436, asparagine 438, serine 440, glutamate 445, aspartate 470, aspartate 472, serine 474, glutamate 481, aspartate 505, aspartate 507, aspartate 509, arginine 511, and glutamate 516.

This sequence belongs to the protein kinase superfamily. Ser/Thr protein kinase family. CDPK subfamily. In terms of tissue distribution, expressed in root tips, leaf veins, mesophyll cells, flower reproductive organs and mature pollen grains.

It is found in the membrane. The enzyme catalyses L-seryl-[protein] + ATP = O-phospho-L-seryl-[protein] + ADP + H(+). It carries out the reaction L-threonyl-[protein] + ATP = O-phospho-L-threonyl-[protein] + ADP + H(+). With respect to regulation, activated by calcium. Autophosphorylation may play an important role in the regulation of the kinase activity. Its function is as follows. May play a role in signal transduction pathways that involve calcium as a second messenger. The polypeptide is Calcium-dependent protein kinase 19 (Oryza sativa subsp. japonica (Rice)).